The primary structure comprises 252 residues: MAAACICQPNLLEINVSDGPLDMIRKKRKIQQPQLRPPLRENKCQPHFSVRKVNQSYIISLHKEITCQLIAEIVKQKLSRIWEKVYIPSYELISDKDGNQIYVEQSVDENRLTSEIMEKLDPNNIDIEAIEILFDDYHLELSRLTNGIIISSANDHFYREFSFNNIIDDNFKICGTSMSADSFDKIYGVMWIEVPFNGNGLQNDSAVNRVSTSHNQIEELNDIEQEIRAFNISRSNQESIIKKEVSRRLNGR.

Its subcellular location is the nucleus. In terms of biological role, involved in the curing of prion [URE3]. Nuclear localization of this protein may suggest a role in transcription regulation, so it might exert an effect on [URE3] through known prion-curing chaperones or BTN2. This chain is Curing of [URE3] protein 1 (CUR1), found in Saccharomyces cerevisiae (strain ATCC 204508 / S288c) (Baker's yeast).